We begin with the raw amino-acid sequence, 723 residues long: Probable G-protein coupled receptor 149 (723 aa).

Residues 1 to 31 are Extracellular-facing; that stretch reads MSVMPSNLSLNGTSFFAENHSIMDKPNEQRT. Residues Asn7, Asn11, and Asn19 are each glycosylated (N-linked (GlcNAc...) asparagine). Residues 32–52 traverse the membrane as a helical segment; sequence LNVFLFCSTFIIAFTVLLGSI. Residues 53-69 lie on the Cytoplasmic side of the membrane; it reads YSLVSLLKLQNKSTISM. Residues 70 to 90 form a helical membrane-spanning segment; sequence IVTSLSIDDLISIVPVIIFML. The Extracellular portion of the chain corresponds to 91–106; sequence TQWSSDALPQPLCTTS. The cysteines at positions 103 and 181 are disulfide-linked. A helical transmembrane segment spans residues 107–127; that stretch reads ALIYLFQGISSNLKGSLIVSY. The Cytoplasmic segment spans residues 128-148; it reads NFYSINKTETMNCSASKRRVS. A helical transmembrane segment spans residues 149–169; sequence MVWAILSIWIVSLLICILPLC. The Extracellular segment spans residues 170–188; the sequence is GWGKYIPTTWGCFTDHASS. A helical transmembrane segment spans residues 189-209; it reads YILFLFIVYSLCFCLLTVLSV. At 210–306 the chain is on the cytoplasmic side; that stretch reads PLTYQLLCSD…SFTVGFAQKR (97 aa). The chain crosses the membrane as a helical span at residues 307–327; it reads FSLILALTKVILWLPMMIQMV. Residues 328 to 338 lie on the Extracellular side of the membrane; sequence VQHITGYQSFS. A helical membrane pass occupies residues 339–359; that stretch reads FETLSFLLTLLAATVTPVFVL. The Cytoplasmic segment spans residues 360–723; the sequence is SEHWIHLPCG…RKREEDGNSN (364 aa). Residues 451-513 are disordered; that stretch reads TTDSARPGPA…ERRLSHEEGH (63 aa). Residues 501 to 513 show a composition bias toward basic and acidic residues; the sequence is EGPERRLSHEEGH.

It belongs to the G-protein coupled receptor 1 family. Specific expression in peripheral nervous system, including nerve growth factor-dependent sensory and sympathetic neurons, as well as enteric neurons.

It localises to the cell membrane. Orphan receptor. The protein is Probable G-protein coupled receptor 149 (GPR149) of Gallus gallus (Chicken).